Here is a 224-residue protein sequence, read N- to C-terminus: Imidazoleglycerol-phosphate dehydratase (224 aa).

This sequence belongs to the imidazoleglycerol-phosphate dehydratase family.

The catalysed reaction is D-erythro-1-(imidazol-4-yl)glycerol 3-phosphate = 3-(imidazol-4-yl)-2-oxopropyl phosphate + H2O. The protein operates within amino-acid biosynthesis; L-histidine biosynthesis; L-histidine from 5-phospho-alpha-D-ribose 1-diphosphate: step 6/9. The sequence is that of Imidazoleglycerol-phosphate dehydratase (HIS3) from Komagataella pastoris (Yeast).